Here is a 451-residue protein sequence, read N- to C-terminus: uncharacterized protein (451 aa).

The TRAM domain occupies 2–60 (VVKVKQKIPLKIKRMGINGEGIGFYQKTLVFVPGALKGENIFCQITAVKRNFAEAKLLT). 4 residues coordinate [4Fe-4S] cluster: cysteine 73, cysteine 79, cysteine 82, and cysteine 162. S-adenosyl-L-methionine-binding residues include glutamine 283, tyrosine 312, aspartate 333, and aspartate 381. Cysteine 408 functions as the Nucleophile in the catalytic mechanism.

This sequence belongs to the class I-like SAM-binding methyltransferase superfamily. RNA M5U methyltransferase family.

This is an uncharacterized protein from Streptococcus pyogenes serotype M3 (strain ATCC BAA-595 / MGAS315).